The following is a 441-amino-acid chain: Transcription factor bHLH90 (441 aa).

One can recognise a bHLH domain in the interval 260 to 309 (NFKSKNLHSERKRRERINQAMYGLRAVVPKITKLNKIGIFSDAVDYINEL).

As to quaternary structure, homodimer. Expressed constitutively in roots, leaves, stems, and flowers.

It is found in the nucleus. The sequence is that of Transcription factor bHLH90 (BHLH90) from Arabidopsis thaliana (Mouse-ear cress).